Here is a 124-residue protein sequence, read N- to C-terminus: MPPKDSKQKKDTSKAKKDKDPVNKSGGKAKKKKWSKGKVRDKLNNLVLFDKATYDKLYKEVPNYKLITPAVVSERLKIRGSLARAALLELLSKGMIKLVSKHRAQVIYTRNTKGTDEGAPEKEA.

Positions 1-22 (MPPKDSKQKKDTSKAKKDKDPV) are enriched in basic and acidic residues. Positions 1-37 (MPPKDSKQKKDTSKAKKDKDPVNKSGGKAKKKKWSKG) are disordered. A compositionally biased stretch (basic residues) spans 27–37 (GKAKKKKWSKG).

It belongs to the eukaryotic ribosomal protein eS25 family. In terms of assembly, component of the small ribosomal subunit.

It is found in the cytoplasm. In terms of biological role, component of the small ribosomal subunit. The ribosome is a large ribonucleoprotein complex responsible for the synthesis of proteins in the cell. The polypeptide is Small ribosomal subunit protein eS25 (rps25) (Ictalurus punctatus (Channel catfish)).